The chain runs to 81 residues: Photosystem I iron-sulfur center (81 aa).

4Fe-4S ferredoxin-type domains lie at 2–31 and 39–68; these read SHSVKIYDTCIGCTQCVRACPTDVLEMIPW and IASAPRTEDCVGCKRCESACPTDFLSVRVY. Residues cysteine 11, cysteine 14, cysteine 17, cysteine 21, cysteine 48, cysteine 51, cysteine 54, and cysteine 58 each coordinate [4Fe-4S] cluster.

In terms of assembly, the eukaryotic PSI reaction center is composed of at least 11 subunits. [4Fe-4S] cluster serves as cofactor.

It is found in the plastid. It localises to the chloroplast thylakoid membrane. It carries out the reaction reduced [plastocyanin] + hnu + oxidized [2Fe-2S]-[ferredoxin] = oxidized [plastocyanin] + reduced [2Fe-2S]-[ferredoxin]. Apoprotein for the two 4Fe-4S centers FA and FB of photosystem I (PSI); essential for photochemical activity. FB is the terminal electron acceptor of PSI, donating electrons to ferredoxin. The C-terminus interacts with PsaA/B/D and helps assemble the protein into the PSI complex. Required for binding of PsaD and PsaE to PSI. PSI is a plastocyanin-ferredoxin oxidoreductase, converting photonic excitation into a charge separation, which transfers an electron from the donor P700 chlorophyll pair to the spectroscopically characterized acceptors A0, A1, FX, FA and FB in turn. The protein is Photosystem I iron-sulfur center of Phalaenopsis aphrodite subsp. formosana (Moth orchid).